The chain runs to 578 residues: Proline--tRNA ligase (578 aa).

The protein belongs to the class-II aminoacyl-tRNA synthetase family. ProS type 1 subfamily. As to quaternary structure, homodimer.

The protein localises to the cytoplasm. It catalyses the reaction tRNA(Pro) + L-proline + ATP = L-prolyl-tRNA(Pro) + AMP + diphosphate. In terms of biological role, catalyzes the attachment of proline to tRNA(Pro) in a two-step reaction: proline is first activated by ATP to form Pro-AMP and then transferred to the acceptor end of tRNA(Pro). As ProRS can inadvertently accommodate and process non-cognate amino acids such as alanine and cysteine, to avoid such errors it has two additional distinct editing activities against alanine. One activity is designated as 'pretransfer' editing and involves the tRNA(Pro)-independent hydrolysis of activated Ala-AMP. The other activity is designated 'posttransfer' editing and involves deacylation of mischarged Ala-tRNA(Pro). The misacylated Cys-tRNA(Pro) is not edited by ProRS. This Paraburkholderia xenovorans (strain LB400) protein is Proline--tRNA ligase.